Here is a 664-residue protein sequence, read N- to C-terminus: Serine/threonine-protein kinase PknD (664 aa).

Residues 1–381 lie on the Cytoplasmic side of the membrane; it reads MSDAVPQVGS…PAGNKRKVWA (381 aa). Positions 15-276 constitute a Protein kinase domain; sequence YQLLRLLGRG…DLAIAAHDAL (262 aa). Residues 21–29 and K44 contribute to the ATP site; that span reads LGRGGMGEV. T135 is modified (phosphothreonine; by autocatalysis). D138 acts as the Proton acceptor in catalysis. Residues T169, T171, T173, and T209 each carry the phosphothreonine; by autocatalysis modification. The segment at 303-333 is disordered; the sequence is TGLSQSESGIAGAGTGPPTPGAARWSPGDSA. A helical membrane pass occupies residues 382–402; that stretch reads VVGAAAIVLVAIVAAAGYLVL. Topologically, residues 403–664 are extracellular; that stretch reads RPSWSPTQAS…GNDRVVKLTS (262 aa). NHL repeat units lie at residues 414 to 456, 457 to 497, 498 to 539, 540 to 581, 582 to 623, and 624 to 664; these read QTVL…LATG, STGT…LAAG, SNNQ…LAAG, SKTQ…LEAE, SNNQ…LLAG, and STTS…KLTS.

It belongs to the protein kinase superfamily. Ser/Thr protein kinase family. In terms of assembly, homodimer. The extracellular domain interacts with host laminin. Post-translationally, autophosphorylated. Dephosphorylated by PstP.

It is found in the cell membrane. It carries out the reaction L-seryl-[protein] + ATP = O-phospho-L-seryl-[protein] + ADP + H(+). The catalysed reaction is L-threonyl-[protein] + ATP = O-phospho-L-threonyl-[protein] + ADP + H(+). Dimerization activates the kinase domain of unphosphorylated PknD via an allosteric mechanism, triggering autophosphorylation and phosphorylation of target proteins. Phosphorylated PknD is fully active even in the absence of dimerization. Part of a signaling pathway that enables adaptation to osmotic stress through cell wall remodeling and virulence factor production. Its function is as follows. Key microbial factor required for central nervous system tuberculosis. Required for invasion of host brain endothelia, but not macrophages, lung epithelia or other endothelia. This Mycobacterium tuberculosis (strain CDC 1551 / Oshkosh) protein is Serine/threonine-protein kinase PknD (pknD).